The sequence spans 193 residues: Lipid A acyltransferase PagP (193 aa).

An N-terminal signal peptide occupies residues 1 to 32 (MNGMAVVMIIRKYFLIIALLVMPWLAIPSVSA). Catalysis depends on residues histidine 65, aspartate 108, and serine 109.

Belongs to the lipid A palmitoyltransferase family. As to quaternary structure, homodimer.

It localises to the cell outer membrane. The enzyme catalyses a lipid A + a 1,2-diacyl-sn-glycero-3-phosphocholine = a hepta-acyl lipid A + a 2-acyl-sn-glycero-3-phosphocholine. The catalysed reaction is a lipid IVA + a 1,2-diacyl-sn-glycero-3-phosphocholine = a lipid IVB + a 2-acyl-sn-glycero-3-phosphocholine. It carries out the reaction a lipid IIA + a 1,2-diacyl-sn-glycero-3-phosphocholine = a lipid IIB + a 2-acyl-sn-glycero-3-phosphocholine. Functionally, transfers a fatty acid residue from the sn-1 position of a phospholipid to the N-linked hydroxyfatty acid chain on the proximal unit of lipid A or its precursors. This chain is Lipid A acyltransferase PagP, found in Salmonella paratyphi C (strain RKS4594).